The chain runs to 1085 residues: Toxin VasX (1085 aa).

Residues 1 to 20 (MSNPNQAAKTGQTNDAQNPA) form a disordered region. A run of 4 helical transmembrane segments spans residues 753-773 (ALGEAIYATGNTIVVAGAISA), 813-833 (IALVATVGMIASALETWESWG), 860-880 (IIFYIQFFTLLGSGIGGPSIA), and 884-904 (AGWMLAGFAVIGIVYLIGVIL).

It is found in the secreted. It localises to the host membrane. Functionally, toxin secreted by the type VI (T6SS) secretion system that acts on prokaryotic target cells. Acts in conjunction with VasW, an accessory protein to VasX, to compromise the inner membrane of prokaryotic target cells. In Vibrio cholerae serotype O1 (strain ATCC 39315 / El Tor Inaba N16961), this protein is Toxin VasX.